Here is a 147-residue protein sequence, read N- to C-terminus: Mucoricin (147 aa).

Residues 4-143 (EEGRLFFIKS…VSANQRWELV (140 aa)) enclose the Ricin B-type lectin domain.

This sequence belongs to the ribosome-inactivating protein family. Type 1 RIP subfamily.

The protein localises to the secreted. It catalyses the reaction Endohydrolysis of the N-glycosidic bond at one specific adenosine on the 28S rRNA.. In terms of biological role, N-glycosylase that inhibits protein synthesis in the host by depurinating ribosomal rRNA, and thus acts as a ribosomal inactivating protein (RIP). Promotes vascular permeability in the host and induces necrosis and apoptosis of host alveolar epithelial cells. This is Mucoricin from Rhizopus delemar (strain RA 99-880 / ATCC MYA-4621 / FGSC 9543 / NRRL 43880) (Mucormycosis agent).